Reading from the N-terminus, the 173-residue chain is Ribosome maturation factor RimM (173 aa).

The 73-residue stretch at 98 to 170 (EGEFYWCDLI…IMTVSPTEGL (73 aa)) folds into the PRC barrel domain.

This sequence belongs to the RimM family. As to quaternary structure, binds ribosomal protein uS19.

The protein localises to the cytoplasm. In terms of biological role, an accessory protein needed during the final step in the assembly of 30S ribosomal subunit, possibly for assembly of the head region. Essential for efficient processing of 16S rRNA. May be needed both before and after RbfA during the maturation of 16S rRNA. It has affinity for free ribosomal 30S subunits but not for 70S ribosomes. The sequence is that of Ribosome maturation factor RimM from Geobacter metallireducens (strain ATCC 53774 / DSM 7210 / GS-15).